Reading from the N-terminus, the 157-residue chain is Transcriptional regulator AzlB (157 aa).

One can recognise an HTH asnC-type domain in the interval 5 to 66 (LDETDKAILR…IVDEKKLGIE (62 aa)). Positions 24–43 (NLNLSKKIGLSPSACLARTK) form a DNA-binding region, H-T-H motif.

In terms of biological role, transcriptional repressor of the azlBCD operon involved in branched-chain amino acid transport. The polypeptide is Transcriptional regulator AzlB (azlB) (Bacillus subtilis (strain 168)).